The primary structure comprises 880 residues: Protein translocase subunit SecA (880 aa).

ATP-binding positions include Gln-87, 105-109 (GEGKT), and Asp-501. The Zn(2+) site is built by Cys-864, Cys-866, Cys-875, and His-876.

The protein belongs to the SecA family. In terms of assembly, monomer and homodimer. Part of the essential Sec protein translocation apparatus which comprises SecA, SecYEG and auxiliary proteins SecDF-YajC and YidC. The cofactor is Zn(2+).

The protein localises to the cell inner membrane. The protein resides in the cytoplasm. It carries out the reaction ATP + H2O + cellular proteinSide 1 = ADP + phosphate + cellular proteinSide 2.. In terms of biological role, part of the Sec protein translocase complex. Interacts with the SecYEG preprotein conducting channel. Has a central role in coupling the hydrolysis of ATP to the transfer of proteins into and across the cell membrane, serving both as a receptor for the preprotein-SecB complex and as an ATP-driven molecular motor driving the stepwise translocation of polypeptide chains across the membrane. In Orientia tsutsugamushi (strain Boryong) (Rickettsia tsutsugamushi), this protein is Protein translocase subunit SecA.